The chain runs to 69 residues: Beta-defensin 122 (69 aa).

Residues 1-19 form the signal peptide; that stretch reads MKPFLVTLAVLLLFFQVTA. 3 cysteine pairs are disulfide-bonded: cysteine 26–cysteine 53, cysteine 33–cysteine 47, and cysteine 37–cysteine 54.

Belongs to the beta-defensin family.

Its subcellular location is the secreted. In terms of biological role, has antibacterial activity. This Macaca mulatta (Rhesus macaque) protein is Beta-defensin 122 (DEFB122).